A 569-amino-acid polypeptide reads, in one-letter code: Proline--tRNA ligase (569 aa).

The protein belongs to the class-II aminoacyl-tRNA synthetase family. ProS type 1 subfamily. Homodimer.

It is found in the cytoplasm. The enzyme catalyses tRNA(Pro) + L-proline + ATP = L-prolyl-tRNA(Pro) + AMP + diphosphate. In terms of biological role, catalyzes the attachment of proline to tRNA(Pro) in a two-step reaction: proline is first activated by ATP to form Pro-AMP and then transferred to the acceptor end of tRNA(Pro). As ProRS can inadvertently accommodate and process non-cognate amino acids such as alanine and cysteine, to avoid such errors it has two additional distinct editing activities against alanine. One activity is designated as 'pretransfer' editing and involves the tRNA(Pro)-independent hydrolysis of activated Ala-AMP. The other activity is designated 'posttransfer' editing and involves deacylation of mischarged Ala-tRNA(Pro). The misacylated Cys-tRNA(Pro) is not edited by ProRS. This Latilactobacillus sakei subsp. sakei (strain 23K) (Lactobacillus sakei subsp. sakei) protein is Proline--tRNA ligase.